The primary structure comprises 865 residues: Bifunctional uridylyltransferase/uridylyl-removing enzyme (865 aa).

The segment at 1-318 (MPHVDLNPLK…FPRPDSDARL (318 aa)) is uridylyltransferase. The segment at 319-675 (IDDDFRNLRE…VRPTEHGEGL (357 aa)) is uridylyl-removing. An HD domain is found at 437-559 (VDQHTLAVVR…VGDERRLAAL (123 aa)). ACT domains are found at residues 676-762 (QVMV…RLPH) and 789-865 (RLSV…QQAA). The tract at residues 747-767 (DPHAARHAHAPRRLPHSHARR) is disordered. Residues 751–767 (ARHAHAPRRLPHSHARR) are compositionally biased toward basic residues.

It belongs to the GlnD family. Requires Mg(2+) as cofactor.

It carries out the reaction [protein-PII]-L-tyrosine + UTP = [protein-PII]-uridylyl-L-tyrosine + diphosphate. The enzyme catalyses [protein-PII]-uridylyl-L-tyrosine + H2O = [protein-PII]-L-tyrosine + UMP + H(+). With respect to regulation, uridylyltransferase (UTase) activity is inhibited by glutamine, while glutamine activates uridylyl-removing (UR) activity. Functionally, modifies, by uridylylation and deuridylylation, the PII regulatory proteins (GlnB and homologs), in response to the nitrogen status of the cell that GlnD senses through the glutamine level. Under low glutamine levels, catalyzes the conversion of the PII proteins and UTP to PII-UMP and PPi, while under higher glutamine levels, GlnD hydrolyzes PII-UMP to PII and UMP (deuridylylation). Thus, controls uridylylation state and activity of the PII proteins, and plays an important role in the regulation of nitrogen assimilation and metabolism. The polypeptide is Bifunctional uridylyltransferase/uridylyl-removing enzyme (Bordetella parapertussis (strain 12822 / ATCC BAA-587 / NCTC 13253)).